The chain runs to 185 residues: Shikimate kinase (185 aa).

Residue G15 to T20 coordinates ATP. Position 19 (S19) interacts with Mg(2+). Substrate contacts are provided by D37, R61, and G83. R121 contacts ATP. R146 lines the substrate pocket.

The protein belongs to the shikimate kinase family. Monomer. It depends on Mg(2+) as a cofactor.

It is found in the cytoplasm. The enzyme catalyses shikimate + ATP = 3-phosphoshikimate + ADP + H(+). It functions in the pathway metabolic intermediate biosynthesis; chorismate biosynthesis; chorismate from D-erythrose 4-phosphate and phosphoenolpyruvate: step 5/7. Its function is as follows. Catalyzes the specific phosphorylation of the 3-hydroxyl group of shikimic acid using ATP as a cosubstrate. The protein is Shikimate kinase of Blochmanniella floridana.